The primary structure comprises 492 residues: Aerolysin-3 (492 aa).

The first 23 residues, 1–23 (MKKLKITGLSLIISGLLMAQAQA), serve as a signal peptide directing secretion. 2 disulfide bridges follow: cysteine 42–cysteine 98 and cysteine 182–cysteine 187. The interaction with host N-linked glycan stretch occupies residues 68 to 84 (WQISGLANGWVIMGPGY). The segment at 256-288 (YGLSEKVTTKNKFKWPLVGETELSIEIAANQSW) is part of the transmembrane beta-barrel after proteolytic activation of the toxin and insertion into the host membrane. Residues 346–355 (RWGGNAWYTH) are interaction with glycans from host GPI-anchor. The propeptide occupies 446 to 492 (AAASHSSRARNLSAGQGLRLEIPLDAQELSGLGFNNVSLSVTPAANQ).

Belongs to the aerolysin family. Homodimer in solution; homoheptamer in the host membrane. After binding to GPI-anchored proteins in target membranes and proteolytic removal of the C-terminal propeptide, the protein assembles into a heptameric pre-pore complex. A further conformation change leads to insertion into the host membrane. Proteolytic cleavage and subsequent release of the propeptide trigger a major conformation change, leading to the formation of a heptameric pre-pore that then inserts into the host membrane.

The protein localises to the secreted. It is found in the host cell membrane. Its function is as follows. Secreted, cytolytic toxin that forms pores in host membranes after proteolytic removal of a C-terminal propeptide, leading to destruction of the membrane permeability barrier and cell death. The pores are formed by transmembrane beta-strands and are approximately 3 nm in diameter. This Aeromonas hydrophila protein is Aerolysin-3 (ahh3).